The sequence spans 615 residues: Dihydroxy-acid dehydratase (615 aa).

Aspartate 81 contributes to the Mg(2+) binding site. Cysteine 122 provides a ligand contact to [2Fe-2S] cluster. Mg(2+)-binding residues include aspartate 123 and lysine 124. At lysine 124 the chain carries N6-carboxylysine. Cysteine 195 contacts [2Fe-2S] cluster. Position 491 (glutamate 491) interacts with Mg(2+). Catalysis depends on serine 517, which acts as the Proton acceptor.

Belongs to the IlvD/Edd family. In terms of assembly, homodimer. [2Fe-2S] cluster is required as a cofactor. The cofactor is Mg(2+).

It carries out the reaction (2R)-2,3-dihydroxy-3-methylbutanoate = 3-methyl-2-oxobutanoate + H2O. It catalyses the reaction (2R,3R)-2,3-dihydroxy-3-methylpentanoate = (S)-3-methyl-2-oxopentanoate + H2O. It participates in amino-acid biosynthesis; L-isoleucine biosynthesis; L-isoleucine from 2-oxobutanoate: step 3/4. Its pathway is amino-acid biosynthesis; L-valine biosynthesis; L-valine from pyruvate: step 3/4. Its function is as follows. Functions in the biosynthesis of branched-chain amino acids. Catalyzes the dehydration of (2R,3R)-2,3-dihydroxy-3-methylpentanoate (2,3-dihydroxy-3-methylvalerate) into 2-oxo-3-methylpentanoate (2-oxo-3-methylvalerate) and of (2R)-2,3-dihydroxy-3-methylbutanoate (2,3-dihydroxyisovalerate) into 2-oxo-3-methylbutanoate (2-oxoisovalerate), the penultimate precursor to L-isoleucine and L-valine, respectively. The polypeptide is Dihydroxy-acid dehydratase (Novosphingobium aromaticivorans (strain ATCC 700278 / DSM 12444 / CCUG 56034 / CIP 105152 / NBRC 16084 / F199)).